We begin with the raw amino-acid sequence, 134 residues long: Early E3B 14.5 kDa protein (134 aa).

A signal peptide spans 1-21 (MQAMLPVILILLLPCIPLAST). The helical transmembrane segment at 54 to 78 (YWIVIVGIINILSCTFFSITIYPTF) threads the bilayer.

It belongs to the adenoviridae E3_14 family. Post-translationally, phosphorylated on serine; O-glycosylated, but not N-glycosylated.

The protein localises to the host membrane. Down-regulates the EGF receptor and prevents cytolysis by TNF. This is Early E3B 14.5 kDa protein from Homo sapiens (Human).